Here is a 175-residue protein sequence, read N- to C-terminus: T-cell surface glycoprotein CD3 epsilon chain (175 aa).

The N-terminal stretch at 1–21 is a signal peptide; sequence MRCEVPLPLLGLLLCVVGAAA. Topologically, residues 22–100 are extracellular; it reads QGGQEEFAVE…VCANCEELDT (79 aa). A helical membrane pass occupies residues 101-121; sequence FTVVGIIAADLLITLGVLILV. Residues 122–175 are Cytoplasmic-facing; the sequence is YYFSKNKKGQSRAAAGSRPRAQKMRRPPPVPNPDYEPIRKGQRDVYAGLEHRGF. Residues 133–163 are disordered; that stretch reads RAAAGSRPRAQKMRRPPPVPNPDYEPIRKGQ. The ITAM domain occupies 146–173; the sequence is RRPPPVPNPDYEPIRKGQRDVYAGLEHR.

In terms of assembly, the TCR/CD3 complex of T-lymphocytes consists of either a TCR alpha/beta or TCR gamma/delta heterodimer coexpressed at the cell surface with the invariant subunits of CD3 labeled gamma, delta, epsilon, zeta, and eta.

The protein resides in the cell membrane. In terms of biological role, the CD3 complex mediates signal transduction, resulting in T-cell activation and proliferation. Required for normal immune responses. The protein is T-cell surface glycoprotein CD3 epsilon chain (CD3E) of Gallus gallus (Chicken).